Consider the following 1068-residue polypeptide: Huntingtin-interacting protein 1-related protein (1068 aa).

N-acetylmethionine is present on methionine 1. Positions 23–151 (EREQFDKTQA…SFHLKHPQFP (129 aa)) constitute an ENTH domain. The stretch at 347–599 (SVKDDRDLQI…RSSQEQGELQ (253 aa)) forms a coiled coil. 3 disordered regions span residues 424-443 (LEGE…ASAT), 529-549 (ARAQ…SSRL), and 582-608 (AALS…RESQ). 2 stretches are compositionally biased toward basic and acidic residues: residues 425-443 (EGER…ASAT) and 539-549 (EQSKSELSSRL). Over residues 590 to 600 (RSSQEQGELQG) the composition is skewed to low complexity. Positions 771–1012 (SLDVRQEELG…ELRKQHYVLA (242 aa)) constitute an I/LWEQ domain. The important for actin binding stretch occupies residues 867 to 924 (RWTEGLISASKAVGWGATQLVEAADKVVLHTGKYEELIVCSHEIAASTAQLVAASKVK). Residues 1016 to 1060 (GSPGEEVAIRPSTAPRSVTTKKPPLAQKPSVAPRQDHQLDKKDGI) form a disordered region. Phosphoserine is present on serine 1017. Over residues 1049-1059 (RQDHQLDKKDG) the composition is skewed to basic and acidic residues.

It belongs to the SLA2 family. In terms of assembly, homodimer. Interacts with actin; homodimerization promotes actin binding. Interacts with CLTB. Interacts with HIP1. Interacts (via ENTH and I/LWEQ domains) with BCL2L10. Brain, heart, kidney, pancreas, and liver, but not in lung or placenta.

Its subcellular location is the cytoplasm. The protein localises to the perinuclear region. The protein resides in the endomembrane system. It is found in the cytoplasmic vesicle. It localises to the clathrin-coated vesicle membrane. Functionally, component of clathrin-coated pits and vesicles, that may link the endocytic machinery to the actin cytoskeleton. Binds 3-phosphoinositides (via ENTH domain). May act through the ENTH domain to promote cell survival by stabilizing receptor tyrosine kinases following ligand-induced endocytosis. The polypeptide is Huntingtin-interacting protein 1-related protein (HIP1R) (Homo sapiens (Human)).